Here is a 249-residue protein sequence, read N- to C-terminus: Diaminopimelate epimerase (249 aa).

Substrate is bound by residues N11 and N60. The active-site Proton donor is C69. Substrate contacts are provided by residues 70–71 (GN), N164, and 182–183 (ER). C192 functions as the Proton acceptor in the catalytic mechanism. 193-194 (GT) is a binding site for substrate.

This sequence belongs to the diaminopimelate epimerase family. As to quaternary structure, homodimer.

It is found in the cytoplasm. It carries out the reaction (2S,6S)-2,6-diaminopimelate = meso-2,6-diaminopimelate. It functions in the pathway amino-acid biosynthesis; L-lysine biosynthesis via DAP pathway; DL-2,6-diaminopimelate from LL-2,6-diaminopimelate: step 1/1. Functionally, catalyzes the stereoinversion of LL-2,6-diaminopimelate (L,L-DAP) to meso-diaminopimelate (meso-DAP), a precursor of L-lysine and an essential component of the bacterial peptidoglycan. This is Diaminopimelate epimerase from Campylobacter jejuni subsp. jejuni serotype O:2 (strain ATCC 700819 / NCTC 11168).